The primary structure comprises 669 residues: Glutamate--cysteine ligase (669 aa).

It belongs to the glutamate--cysteine ligase type 3 family. In terms of assembly, heterodimer of a catalytic heavy chain and a regulatory light chain.

The enzyme catalyses L-cysteine + L-glutamate + ATP = gamma-L-glutamyl-L-cysteine + ADP + phosphate + H(+). Its pathway is sulfur metabolism; glutathione biosynthesis; glutathione from L-cysteine and L-glutamate: step 1/2. In terms of biological role, catalyzes the ATP-dependent ligation of L-glutamate and L-cysteine and participates in the first and rate-limiting step in glutathione biosynthesis. The sequence is that of Glutamate--cysteine ligase (gcs1) from Schizosaccharomyces pombe (strain 972 / ATCC 24843) (Fission yeast).